A 59-amino-acid chain; its full sequence is MSTYESLMVMIGFANLIGGIMTWVISLLTLLFMLRKKDTHPIYITVKEKCLHEDPPIKG.

A helical transmembrane segment spans residues 7 to 27; that stretch reads LMVMIGFANLIGGIMTWVISL.

It localises to the cell membrane. Functionally, toxic component of a type I toxin-antitoxin (TA) system. Overexpression of txpA causes cell lysis; the TxpA protein has been suggested to act on the cell membrane or might possibly block cell wall synthesis. Overexpression in E.coli is not toxic. This Bacillus subtilis (strain 168) protein is Toxin TxpA.